We begin with the raw amino-acid sequence, 123 residues long: Small ribosomal subunit protein uS12 (123 aa).

A 3-methylthioaspartic acid modification is found at D89. The interval 104 to 123 (TAGVKDRKQARSKYGAKRPK) is disordered. The span at 113–123 (ARSKYGAKRPK) shows a compositional bias: basic residues.

Belongs to the universal ribosomal protein uS12 family. Part of the 30S ribosomal subunit. Contacts proteins S8 and S17. May interact with IF1 in the 30S initiation complex.

Its function is as follows. With S4 and S5 plays an important role in translational accuracy. Functionally, interacts with and stabilizes bases of the 16S rRNA that are involved in tRNA selection in the A site and with the mRNA backbone. Located at the interface of the 30S and 50S subunits, it traverses the body of the 30S subunit contacting proteins on the other side and probably holding the rRNA structure together. The combined cluster of proteins S8, S12 and S17 appears to hold together the shoulder and platform of the 30S subunit. The polypeptide is Small ribosomal subunit protein uS12 (Chromobacterium violaceum (strain ATCC 12472 / DSM 30191 / JCM 1249 / CCUG 213 / NBRC 12614 / NCIMB 9131 / NCTC 9757 / MK)).